Here is a 260-residue protein sequence, read N- to C-terminus: 3-deoxy-manno-octulosonate cytidylyltransferase (260 aa).

Belongs to the KdsB family.

The protein localises to the cytoplasm. It carries out the reaction 3-deoxy-alpha-D-manno-oct-2-ulosonate + CTP = CMP-3-deoxy-beta-D-manno-octulosonate + diphosphate. The protein operates within nucleotide-sugar biosynthesis; CMP-3-deoxy-D-manno-octulosonate biosynthesis; CMP-3-deoxy-D-manno-octulosonate from 3-deoxy-D-manno-octulosonate and CTP: step 1/1. It functions in the pathway bacterial outer membrane biogenesis; lipopolysaccharide biosynthesis. Its function is as follows. Activates KDO (a required 8-carbon sugar) for incorporation into bacterial lipopolysaccharide in Gram-negative bacteria. The polypeptide is 3-deoxy-manno-octulosonate cytidylyltransferase (Polaromonas naphthalenivorans (strain CJ2)).